The following is a 309-amino-acid chain: MFWKKDPTVSWERKNINDIDFSRFNVAIIGGTGGLGRAISRELAQRNARVTVVGQTFRDEDLKDKINFVKADLSLVSECKRISHSDEIPYEELTHLIFTTGIFASRQRQATSEGLEKDMAVSYLSRYIIFHDVAKRLGISRTKKDDLPKVFIAGFPGNGQVGDPDDLNSDEKKYSAYATHMNTVAANESLVIDAKDRYTNIDTFGLNPGLIKTNIRNNLLGSDTYLSRITEWIISWTCQSAETYAKTICTLIASPAIESRSGTMFSNKGDAILPSPGLTKDVVEKFMENSELLVEKALRNQSPFTSSNE.

A helical membrane pass occupies residues 23–39 (RFNVAIIGGTGGLGRAI).

It belongs to the NmrA-type oxidoreductase family.

It localises to the membrane. This is an uncharacterized protein from Saccharomyces cerevisiae (strain ATCC 204508 / S288c) (Baker's yeast).